The chain runs to 133 residues: Magnetosome protein MamC (133 aa).

Over 1 to 5 (MAAFN) the chain is Cytoplasmic. A helical transmembrane segment spans residues 6–26 (LALYLSKSIPGVGVLGGVIGG). Topologically, residues 27 to 67 (SAALAKNLKAKQRGEITTEEAVIDTGKEALGAGLATTVSAY) are lumenal. The segment at 37-57 (KQRGEITTEEAVIDTGKEALG) is magnetite interacting component (MIC) binds magnetite. Residues 68 to 88 (AAGVVGGGLVVSLGTAFAVAV) traverse the membrane as a helical segment. Residues 89–133 (AGKYAWDYGMEQMEAKLQEKKHQEQGGQTYGDNPDPFDPQELETP) are Cytoplasmic-facing. Residues 105–133 (LQEKKHQEQGGQTYGDNPDPFDPQELETP) form a disordered region.

Belongs to the magnetosome MamC family. In terms of assembly, probably interacts with MamA.

It localises to the magnetosome membrane. Probably helps control the size of magnetite crystals; in vitro synthesis of magnetite yields larger and more well-developed magnetite crystals in the presence of purified MamC. Binds Fe(3+). The lumenal domain probably binds magnetite crystals, affecting crystal size and shape. Purified MamC self-assembles into micelles in the presence of ferric chloride hexahydrate (FeCl(3).6H(2)O); both oxygen and iron are present in the proteinaceous micelles. Whether this is relevant in vivo is unknown. The protein is Magnetosome protein MamC of Magnetococcus marinus (strain ATCC BAA-1437 / JCM 17883 / MC-1).